Reading from the N-terminus, the 503-residue chain is Probable inactive beta-glucosidase 33 (503 aa).

The N-terminal stretch at 1-30 (MATGELALVSSLFIVVVFLLLGAVAREASA) is a signal peptide. Residues Q50, H150, and 195-196 (NQ) each bind a beta-D-glucoside. An intrachain disulfide couples C215 to C223. A glycan (N-linked (GlcNAc...) asparagine) is linked at N222. Positions 339 and 399 each coordinate a beta-D-glucoside. E399 serves as the catalytic Nucleophile. The N-linked (GlcNAc...) asparagine glycan is linked to N436. Residues W446, 453–454 (EF), and F462 each bind a beta-D-glucoside.

It belongs to the glycosyl hydrolase 1 family.

This is Probable inactive beta-glucosidase 33 (BGLU33) from Oryza sativa subsp. japonica (Rice).